Here is a 279-residue protein sequence, read N- to C-terminus: MQERGLVGLGLRREMLSEFCQQLPSAIDFLEVAPENWMTLGGKYGKQFRQLTEQHTFFCHGLSLSIGSPEPLDLEFVRRIKAFMDLHQIDVYSEHLSYCSGAGHLYDLMPIPFTEAAVKHVARRVKQVEDILERPLILENVSFYAAPSAQMTELAFLTAVLEEADCKLLLDVNNIYVNSINHQYDALAFLKAMPTERIAYLHIAGHFKESEELLIDTHGSDINAPVWALLDSCYAEHGVLPTLLERDFNLPATAHLLDEINQIHAYQARAKSNLDKRIA.

The protein belongs to the UPF0276 family.

This is UPF0276 protein SO_2008 from Shewanella oneidensis (strain ATCC 700550 / JCM 31522 / CIP 106686 / LMG 19005 / NCIMB 14063 / MR-1).